We begin with the raw amino-acid sequence, 248 residues long: tRNA (guanine-N(1)-)-methyltransferase (248 aa).

Residues Gly-126 and 150–155 each bind S-adenosyl-L-methionine; that span reads LGDYVL. Residues 224 to 248 form a disordered region; that stretch reads WRRTQQEERTRERRPDLWAAFDSED. Over residues 227–239 the composition is skewed to basic and acidic residues; sequence TQQEERTRERRPD.

This sequence belongs to the RNA methyltransferase TrmD family. As to quaternary structure, homodimer.

It is found in the cytoplasm. It carries out the reaction guanosine(37) in tRNA + S-adenosyl-L-methionine = N(1)-methylguanosine(37) in tRNA + S-adenosyl-L-homocysteine + H(+). Functionally, specifically methylates guanosine-37 in various tRNAs. The chain is tRNA (guanine-N(1)-)-methyltransferase from Micrococcus luteus (strain ATCC 4698 / DSM 20030 / JCM 1464 / CCM 169 / CCUG 5858 / IAM 1056 / NBRC 3333 / NCIMB 9278 / NCTC 2665 / VKM Ac-2230) (Micrococcus lysodeikticus).